Reading from the N-terminus, the 380-residue chain is Crotonobetainyl-CoA reductase (380 aa).

The protein belongs to the acyl-CoA dehydrogenase family. In terms of assembly, homotetramer. FAD serves as cofactor.

The protein localises to the cytoplasm. It carries out the reaction 4-(trimethylamino)butanoyl-CoA + oxidized [electron-transfer flavoprotein] + H(+) = crotonobetainyl-CoA + reduced [electron-transfer flavoprotein]. The protein operates within amine and polyamine metabolism; carnitine metabolism. Functionally, catalyzes the reduction of crotonobetainyl-CoA to gamma-butyrobetainyl-CoA. The polypeptide is Crotonobetainyl-CoA reductase (Escherichia coli (strain UTI89 / UPEC)).